The primary structure comprises 921 residues: MGLGIDPSVAITALIVVILVVPMDCQRPQLVNIGAVFAFDSVIGRAAKVALEAAVSDVNNDKSFLKETELRLLMEDSACNVFRGSFGAFELLEKEVVAMIGPISSSVAHTISDIAKGLHFPLVSFAATDPTLSALQFPFFLRTTPNDAHQMSALVDLINFYGWKEVISVYSDDELGRNGVSALDDELYKKRSRISYKVPLSVHSDEKFLTNALNKSKSIGPRVYILHFGPDPLLRIFDIAQKLQMMTHEYVWLATDWLSVTLDSLSDKGTLKRLEGVVGLRQHIPESVKMEHFTHKLQSNRSMNAYALHAYDTVWMIAHGIEELLNEGINITFSYSEKLLHARGTKLHLEKIKFFNSGELLLEKLLKVNFTGIAGQVQFGSGRNVIGCDYEIINVNKTDVHTVGFWSKNGGFSVVAPKTRHSQKKTSFVSDEKLGDITWPGGGREKPRGWVIADSADPLKIVVPRRVSFVEFVTEEKNSSHRIQGFCIDVFIEALKFVPYSVPYIFEPFGNGHSSPNYNHLIQMVTDGVYDAAVGDIAIVPSRSKLVDFSQPYASTGLVVVIPANDDNATWIFLRPFTSRLWCVVLVSFLVIAVVIWILEHRINEDFRGPPRRQLSTMLLFSFSTLFKRNQEDTISNLARLVMIVWLFLLMVLTASYTANLTSILTVQQLPSAITGIDSLRASEVPIGYQAGTFTLEYLTYSLGMARSRLVPLDSTEEYEKALKLGPTNWGGVAAIVDELPYIELFLAERTGFKIVGEPFMHRGWGFAFKRDSPLAIDMSTAILKLSETRKLQEIRKKWLCKTNCAGKSNWNPEPNQLHLKSFKGLYLVCIAITVSAFLVFVLRMIRQFVRYRRMERTSSMPRASWSASPTLRLRELVFDFVEFVDEKEEAIKRMFRRSDDSNNNPSHVGEVQADTEVPRN.

The N-terminal stretch at Met-1 to Cys-25 is a signal peptide. Residues Gln-26–Arg-580 are Extracellular-facing. Residues Asn-214, Asn-300, Asn-330, Asn-369, Asn-396, Asn-478, and Asn-568 are each glycosylated (N-linked (GlcNAc...) asparagine). A helical transmembrane segment spans residues Leu-581 to His-601. Residues Arg-602–Arg-608 lie on the Cytoplasmic side of the membrane. The helical transmembrane segment at Gly-609–Arg-629 threads the bilayer. The Cytoplasmic portion of the chain corresponds to Asn-630–Arg-640. The helical transmembrane segment at Leu-641–Leu-661 threads the bilayer. Topologically, residues Thr-662 to Ser-822 are extracellular. Residues Phe-823–Leu-843 form a helical membrane-spanning segment. The Cytoplasmic portion of the chain corresponds to Arg-844–Asn-921. Positions Phe-896–Asn-921 are disordered.

It belongs to the glutamate-gated ion channel (TC 1.A.10.1) family. May form heteromers. In terms of tissue distribution, expressed predominantly in leaves and siliques. Also detected in roots.

The protein resides in the membrane. Its function is as follows. Glutamate-gated receptor that probably acts as a non-selective cation channel. May be involved in light-signal transduction and calcium homeostasis via the regulation of calcium influx into cells. This is Glutamate receptor 3.7 (GLR3.7) from Arabidopsis thaliana (Mouse-ear cress).